The following is a 321-amino-acid chain: GDP-L-fucose synthase (321 aa).

14-20 is a binding site for NADP(+); that stretch reads GGSGLVG. Tyr-143 serves as the catalytic Proton donor/acceptor. NADP(+) is bound by residues Lys-147, 170-173, and His-186; that span reads PTNV. The substrate site is built by Lys-194, Trp-208, Arg-215, and Asp-277.

This sequence belongs to the NAD(P)-dependent epimerase/dehydratase family. Fucose synthase subfamily. As to quaternary structure, homodimer.

It carries out the reaction GDP-beta-L-fucose + NADP(+) = GDP-4-dehydro-alpha-D-rhamnose + NADPH + H(+). It functions in the pathway nucleotide-sugar biosynthesis; GDP-L-fucose biosynthesis via de novo pathway; GDP-L-fucose from GDP-alpha-D-mannose: step 2/2. In terms of biological role, catalyzes the two-step NADP-dependent conversion of GDP-4-dehydro-6-deoxy-D-mannose to GDP-fucose, involving an epimerase and a reductase reaction. This Mus musculus (Mouse) protein is GDP-L-fucose synthase.